The chain runs to 461 residues: Coronin-1A (461 aa).

S2 is subject to N-acetylserine. Position 2 is a phosphoserine; by PKC (S2). WD repeat units lie at residues 13–63, 73–110, 123–160, 164–204, 207–251, 258–296, and 302–349; these read HVFG…LVLP, NVPM…MVWE, PVVT…LVWD, GVAV…RIIE, KGTI…ALWD, PLSL…RYFE, and PFLH…EPIA. Over residues 404–418 the composition is skewed to basic and acidic residues; the sequence is LRVNRGLDTGRKRTT. A disordered region spans residues 404–429; it reads LRVNRGLDTGRKRTTPEASGAPSSDA. T412 is subject to Phosphothreonine; by PKC. The residue at position 418 (T418) is a Phosphothreonine. A Phosphoserine modification is found at S422. Positions 424 to 460 form a coiled coil; it reads APSSDAISRLEEEMRKLQATVQELQKRLDRLEETVQA. N6-acetyllysine is present on K449.

This sequence belongs to the WD repeat coronin family. Binds actin. In terms of processing, phosphorylation at Thr-412 by PKC strongly down-regulates the association with actin. Polyubiquitinated by RNF128 with 'Lys-48'-linked chains, leading to proteasomal degradation. As to expression, expressed in brain, thymus, spleen, bone marrow and lymph node. Low in lung and gut.

The protein localises to the cytoplasm. Its subcellular location is the cytoskeleton. The protein resides in the cell cortex. It is found in the cytoplasmic vesicle. It localises to the phagosome membrane. May be a crucial component of the cytoskeleton of highly motile cells, functioning both in the invagination of large pieces of plasma membrane, as well as in forming protrusions of the plasma membrane involved in cell locomotion. In mycobacteria-infected macrophages, its retention on the phagosomal membrane prevents fusion between phagosomes and lysosomes. The protein is Coronin-1A (CORO1A) of Bos taurus (Bovine).